The sequence spans 155 residues: Small ribosomal subunit protein uS7 (155 aa).

This sequence belongs to the universal ribosomal protein uS7 family. Part of the 30S ribosomal subunit. Contacts proteins S9 and S11.

One of the primary rRNA binding proteins, it binds directly to 16S rRNA where it nucleates assembly of the head domain of the 30S subunit. Is located at the subunit interface close to the decoding center, probably blocks exit of the E-site tRNA. This chain is Small ribosomal subunit protein uS7, found in Thermosipho melanesiensis (strain DSM 12029 / CIP 104789 / BI429).